Consider the following 478-residue polypeptide: Sulfate adenylyltransferase subunit 1 (478 aa).

Residues lysine 24–aspartate 240 form the tr-type G domain. The tract at residues glycine 33–serine 40 is G1. GTP is bound at residue glycine 33–serine 40. Residues glycine 91 to aspartate 95 form a G2 region. Positions aspartate 112–glycine 115 are G3. Residues aspartate 112–histidine 116 and asparagine 167–aspartate 170 each bind GTP. A G4 region spans residues asparagine 167 to aspartate 170. The interval serine 206–leucine 208 is G5.

Belongs to the TRAFAC class translation factor GTPase superfamily. Classic translation factor GTPase family. CysN/NodQ subfamily. As to quaternary structure, heterodimer composed of CysD, the smaller subunit, and CysN.

The catalysed reaction is sulfate + ATP + H(+) = adenosine 5'-phosphosulfate + diphosphate. Its pathway is sulfur metabolism; hydrogen sulfide biosynthesis; sulfite from sulfate: step 1/3. In terms of biological role, with CysD forms the ATP sulfurylase (ATPS) that catalyzes the adenylation of sulfate producing adenosine 5'-phosphosulfate (APS) and diphosphate, the first enzymatic step in sulfur assimilation pathway. APS synthesis involves the formation of a high-energy phosphoric-sulfuric acid anhydride bond driven by GTP hydrolysis by CysN coupled to ATP hydrolysis by CysD. This is Sulfate adenylyltransferase subunit 1 from Aliivibrio fischeri (strain MJ11) (Vibrio fischeri).